Reading from the N-terminus, the 340-residue chain is GTP 3',8-cyclase (340 aa).

The Radical SAM core domain maps to 8 to 230; the sequence is KLGRPIRDLR…EQHFEIDPVE (223 aa). Arg17 serves as a coordination point for GTP. [4Fe-4S] cluster contacts are provided by Cys24 and Cys28. S-adenosyl-L-methionine is bound at residue Tyr30. Cys31 is a binding site for [4Fe-4S] cluster. Arg71 contacts GTP. Gly75 serves as a coordination point for S-adenosyl-L-methionine. Thr102 contributes to the GTP binding site. Ser126 provides a ligand contact to S-adenosyl-L-methionine. GTP is bound at residue Lys163. Met197 serves as a coordination point for S-adenosyl-L-methionine. [4Fe-4S] cluster-binding residues include Cys261 and Cys264. 266–268 contacts GTP; that stretch reads RAR. A [4Fe-4S] cluster-binding site is contributed by Cys278.

The protein belongs to the radical SAM superfamily. MoaA family. Monomer and homodimer. It depends on [4Fe-4S] cluster as a cofactor.

The enzyme catalyses GTP + AH2 + S-adenosyl-L-methionine = (8S)-3',8-cyclo-7,8-dihydroguanosine 5'-triphosphate + 5'-deoxyadenosine + L-methionine + A + H(+). The protein operates within cofactor biosynthesis; molybdopterin biosynthesis. Catalyzes the cyclization of GTP to (8S)-3',8-cyclo-7,8-dihydroguanosine 5'-triphosphate. The sequence is that of GTP 3',8-cyclase from Staphylococcus aureus (strain bovine RF122 / ET3-1).